A 183-amino-acid polypeptide reads, in one-letter code: Photosystem I assembly protein Ycf4 (183 aa).

2 helical membrane passes run 17-39 and 59-81; these read NYLL…FLSY and FIPQ…IYIY.

Belongs to the Ycf4 family.

It localises to the plastid. It is found in the chloroplast thylakoid membrane. Its function is as follows. Seems to be required for the assembly of the photosystem I complex. The chain is Photosystem I assembly protein Ycf4 from Cyanidium caldarium (Red alga).